A 1953-amino-acid chain; its full sequence is Protein BNI1 (1953 aa).

4 disordered regions span residues Met-1 to Leu-152, Met-230 to Ser-258, Lys-263 to Leu-282, and Thr-287 to Leu-306. The segment covering Ala-31–Thr-40 has biased composition (low complexity). 2 stretches are compositionally biased toward polar residues: residues Gly-41–Met-100 and Val-110–Thr-143. Residues Glu-174–Glu-696 enclose the GBD/FH3 domain. Low complexity predominate over residues Ala-232–Ala-246. The segment covering Lys-263–Tyr-278 has biased composition (polar residues). A phosphoserine mark is found at Ser-311 and Ser-325. The interval Leu-312–Pro-337 is disordered. Coiled-coil stretches lie at residues Gln-712–Asn-807, Asn-864–Lys-894, and Asn-928–Phe-981. 3 disordered regions span residues Ile-990–Pro-1014, His-1040–Leu-1094, and Thr-1149–Ser-1330. Residues Ser-1053–Thr-1337 form the FH1 domain. Ser-1085 and Ser-1170 each carry phosphoserine. Residues Asp-1184–Ala-1211 are compositionally biased toward basic and acidic residues. The span at Ser-1217–Ser-1237 shows a compositional bias: polar residues. Positions Gln-1238–Pro-1250 are enriched in pro residues. The span at Ser-1257–Lys-1270 shows a compositional bias: basic and acidic residues. Positions Pro-1278–Met-1292 are enriched in pro residues. 2 positions are modified to phosphoserine: Ser-1338 and Ser-1344. Positions Phe-1348–Glu-1766 constitute an FH2 domain. Residues Lys-1732–Ala-1811 adopt a coiled-coil conformation. Over residues Gln-1768–Glu-1779 the composition is skewed to basic and acidic residues. Disordered stretches follow at residues Gln-1768–Arg-1797, Lys-1809–Asp-1844, and Pro-1872–Gln-1899. The DAD domain maps to Asp-1792–Leu-1826. Basic residues predominate over residues Ala-1821–Lys-1830. A compositionally biased stretch (polar residues) spans Val-1880–Leu-1896. Thr-1918 carries the post-translational modification Phosphothreonine.

The protein belongs to the formin homology family. BNI1 subfamily. As to quaternary structure, homodimer, and possibly also homotetramer. Interacts with PFY1 via the FH1 domain and with actin via the FH2 domain.

The protein resides in the cell membrane. It is found in the cell projection. Its subcellular location is the ruffle membrane. It localises to the cytoplasm. The protein localises to the cytoskeleton. Required for the assembly of F-actin structures, such as actin cables and stress fibers. Nucleates actin filaments. Binds to the barbed end of the actin filament and acts as a leaky capper, slowing both polymerization and depolymerization. Protects the growing actin fiber from tight capping proteins and so increases the time of elongation and the total amount of F-actin. May organize microtubules by mediating spindle positioning and movement in the budding process. Potential target of the RHO family members. The polypeptide is Protein BNI1 (BNI1) (Saccharomyces cerevisiae (strain ATCC 204508 / S288c) (Baker's yeast)).